A 353-amino-acid chain; its full sequence is MPQKVRIALDAMGGDFGPSVVIPGAAIALGRHPDAEFLLFGDSALIDKELAAHPALKKVSRVVHTDVAVSMHDKPSQALRRGRKVSSMWLAIEAVKKGEADVAVSAGNTGALMAMARFCLRTLPGIDRPAIAATWPTVRGDSVVLDLGATIGGDAAHLKALAVMGAAMASVLFDLERPTVGLLNIGVEEIKGGEEIREAAELLRAMQSPPFEFIGFVEGDGIGSGAADVIVSEGFSGNIALKAAEGTARQIIQLLRDAMSRTWSAKIGYLFARGAFRALRDKIDPNKSNGGVFLGLNGIVVKSHGGTNADGFAYAVDVSYDMVRYDLLTKINQTLNRETGALVSTPSAQEAVS.

Belongs to the PlsX family. Homodimer. Probably interacts with PlsY.

The protein resides in the cytoplasm. The enzyme catalyses a fatty acyl-[ACP] + phosphate = an acyl phosphate + holo-[ACP]. It participates in lipid metabolism; phospholipid metabolism. In terms of biological role, catalyzes the reversible formation of acyl-phosphate (acyl-PO(4)) from acyl-[acyl-carrier-protein] (acyl-ACP). This enzyme utilizes acyl-ACP as fatty acyl donor, but not acyl-CoA. This chain is Phosphate acyltransferase, found in Rhodopseudomonas palustris (strain BisB5).